The chain runs to 590 residues: G protein-coupled receptor kinase 5 (590 aa).

An N-terminal region spans residues 1–185 (MELENIVANT…LERQPVTKNT (185 aa)). The segment at 20 to 39 (GGKRKGKSKKWKEILKFPHI) is interaction with calmodulin. An RGS domain is found at 53–171 (YCSLCDKQPV…LDSMYFDRFL (119 aa)). The Protein kinase domain occupies 186–448 (FRQYRVLGKG…AAEVKRHPFF (263 aa)). ATP contacts are provided by residues 192–200 (LGKGGFGEV) and K215. The Proton acceptor role is filled by D311. The short motif at 388–395 (RKEKVKRE) is the Nuclear localization signal element. Positions 449-514 (RNMNFKRLEA…GSVPIPWQSE (66 aa)) constitute an AGC-kinase C-terminal domain. Position 484 is a phosphoserine; by autocatalysis (S484). T485 carries the post-translational modification Phosphothreonine; by autocatalysis. Positions 546-565 (PKKGLLQRLFKRQHQNNSKS) are sufficient for membrane localization. Residues 554 to 590 (LFKRQHQNNSKSSPNSKTSFNHHINSNHVSSNSTGSS) form a disordered region. Residues 561-590 (NNSKSSPNSKTSFNHHINSNHVSSNSTGSS) are compositionally biased toward low complexity. S579 is modified (phosphoserine).

This sequence belongs to the protein kinase superfamily. AGC Ser/Thr protein kinase family. GPRK subfamily. As to quaternary structure, interacts with ST13 (via the C-terminus 303-319 AA). Interacts with TP53/p53. Interacts with HTR4 (via C-terminus 330-346 AA); this interaction is promoted by 5-HT (serotonin). Interacts with HDAC5. Interacts with GIT1. In terms of processing, autophosphorylated. Autophosphorylation may play a critical role in the regulation of GRK5 kinase activity. As to expression, highest levels in lung, heart, retina, lingual epithelium. Very little in brain, liver, kidney.

The protein resides in the cytoplasm. It localises to the nucleus. It is found in the cell membrane. It catalyses the reaction [G-protein-coupled receptor] + ATP = [G-protein-coupled receptor]-phosphate + ADP + H(+). Its activity is regulated as follows. Inhibited by calmodulin with an IC(50) of 50 nM. Calmodulin inhibits GRK5 association with receptor and phospholipid. Its function is as follows. Serine/threonine kinase that phosphorylates preferentially the activated forms of a variety of G-protein-coupled receptors (GPCRs). Such receptor phosphorylation initiates beta-arrestin-mediated receptor desensitization, internalization, and signaling events leading to their down-regulation. Phosphorylates a variety of GPCRs, including adrenergic receptors (Beta-2 adrenergic receptor), muscarinic acetylcholine receptors (more specifically Gi-coupled M2/M4 subtypes), dopamine receptors and opioid receptors. In addition to GPCRs, also phosphorylates various substrates: Hsc70-interacting protein/ST13, TP53/p53, HDAC5, and arrestin-1/ARRB1. Phosphorylation of ARRB1 by GRK5 inhibits G-protein independent MAPK1/MAPK3 signaling downstream of 5HT4-receptors. Phosphorylation of HDAC5, a repressor of myocyte enhancer factor 2 (MEF2) leading to nuclear export of HDAC5 and allowing MEF2-mediated transcription. Phosphorylation of TP53/p53, a crucial tumor suppressor, inhibits TP53/p53-mediated apoptosis. Phosphorylation of ST13 regulates internalization of the chemokine receptor. Phosphorylates rhodopsin (RHO) (in vitro) and a non G-protein-coupled receptor, LRP6 during Wnt signaling (in vitro). The protein is G protein-coupled receptor kinase 5 (GRK5) of Bos taurus (Bovine).